A 136-amino-acid chain; its full sequence is Evasin P991 (136 aa).

An N-terminal signal peptide occupies residues 1-28 (MHSTIVYACLLALAVFVALHGTPLAALA). N-linked (GlcNAc...) asparagine glycans are attached at residues asparagine 41, asparagine 61, asparagine 64, asparagine 78, asparagine 92, asparagine 100, and asparagine 122. 4 disulfides stabilise this stretch: cysteine 55–cysteine 77, cysteine 73–cysteine 114, cysteine 90–cysteine 119, and cysteine 109–cysteine 128.

It localises to the secreted. In terms of biological role, salivary chemokine-binding protein which has chemokine-neutralizing activity and binds to host chemokines CCL2, CCL3, CCL3L1, CCL4, CCL4L1, CCL5, CCL6, CCL7, CCL8, CCL9, CCL11, CCL12, CCL13, CCL14, CCL16, CCL17, CCL18, CCL19, CCL22, CCL23, CCL24 and CCL27. This chain is Evasin P991, found in Amblyomma cajennense (Cayenne tick).